We begin with the raw amino-acid sequence, 385 residues long: Putative transporter YthQ (385 aa).

A run of 8 helical transmembrane segments spans residues 24 to 44 (AVIDWTVALYIVLPAIAFVIY), 67 to 87 (WLYAVCVLIMFTGSIRTFLME), 106 to 128 (YALLYSFLATLAKWLLLFFIVLP), 133 to 155 (SVLITFAESTALLCYLFGLHIFF), 176 to 193 (TLVRAILFAGSAILIVFT), 197 to 214 (LLALFGILFLFFSVIRSL), 304 to 324 (AFTVLIFVSPIWLKVIALLVY), and 365 to 385 (ILHYAFAACCFLAAAVSLLFT).

The protein resides in the cell membrane. This chain is Putative transporter YthQ (ythQ), found in Bacillus subtilis (strain 168).